Consider the following 546-residue polypeptide: MCSLGLFPPPPPRGQVTLYEHNNELVTGNSYESPPPDFRGQWINLPVLHLTKDPLKAPGRLDHGTRTAFIHHREQVWKRCINVWHDVGLFGVLNEIANSEEEVFEWVKTACSWALALCGRASSLHGSLFPHLSLRSEDLIAEFAQVTNWSSCCLRVFAWHPHTNKFAVALLDDSIRVYNANSTIVPSLKHRLQRNVAALAWKPLSASVLAVACQSCILIWTLDPTSLSTRPSSGCAQVLSHPGHTPVTSLAWAPNGGWLLSASPVDAVILVWDVSTETCVPLPWFRGGGVTNLLWSPDGSKVLATTPSAVFRVWEAQMWTCEAWPTLSGRCQTGCWSPDGNRLLFTVLGEALIYSLSFPERCGTGKGHVGGAKSATIVADLSETTIQTPDGEERLGGEAHSMVWDPSGERLAVLMKGNPQVQDGNPVILLFRTRNSPVFELLPCGIIQGEPGAQAQLITFHPSFNKGALLSVCWSTGRITHIPLYFVNAQFPRFSPVLGRAQEPPAGGGGSIHEVPLFTETSPTSAPWDPLPGQSSAQPHSPHSHL.

Residue cysteine 2 is modified to N-acetylcysteine. The residue at position 33 (serine 33) is a Phosphoserine. WD repeat units follow at residues 149–188 (WSSCCLRVFAWHPHTNKFAVALLDDSIRVYNANSTIVPSL), 191–230 (RLQRNVAALAWKPLSASVLAVACQSCILIWTLDPTSLSTR), 243–282 (GHTPVTSLAWAPNGGWLLSASPVDAVILVWDVSTETCVPL), and 285–324 (FRGGGVTNLLWSPDGSKVLATTPSAVFRVWEAQMWTCEAW). Serine 495, serine 511, serine 522, serine 525, and serine 541 each carry phosphoserine. The disordered stretch occupies residues 500-546 (RAQEPPAGGGGSIHEVPLFTETSPTSAPWDPLPGQSSAQPHSPHSHL). Residues 534 to 546 (QSSAQPHSPHSHL) show a composition bias toward low complexity. The Microbody targeting signal signature appears at 544 to 546 (SHL).

In terms of assembly, interacts with NDC1, the interaction is required for nuclear pore localization. Interacts with the inactive form aurora kinase AURKA. Interacts with PGRMC2. Widely expressed. Particularly abundant in cerebellum, corpus callosum, adrenal gland, pituitary gland, gastrointestinal structures and fetal lung.

The protein resides in the nucleus. Its subcellular location is the nuclear pore complex. It is found in the cytoplasm. It localises to the cytoskeleton. The protein localises to the spindle pole. The protein resides in the nucleus envelope. Its function is as follows. Plays a role in the normal development of the peripheral and central nervous system. Required for the correct localization of aurora kinase AURKA and the microtubule minus end-binding protein NUMA1 as well as a subset of AURKA targets which ensures proper spindle formation and timely chromosome alignment. This chain is Aladin (Aaas), found in Mus musculus (Mouse).